The following is a 633-amino-acid chain: Extracellular metalloproteinase 5 (633 aa).

The first 21 residues, Met1–His21, serve as a signal peptide directing secretion. Residues Pro22–Ala245 constitute a propeptide that is removed on maturation. An N-linked (GlcNAc...) asparagine glycan is attached at Asn285. Position 428 (His428) interacts with Zn(2+). Glu429 is an active-site residue. His432 provides a ligand contact to Zn(2+). N-linked (GlcNAc...) asparagine glycosylation is found at Asn592 and Asn621.

Belongs to the peptidase M36 family. It depends on Zn(2+) as a cofactor.

Its subcellular location is the secreted. Its function is as follows. Secreted metalloproteinase probably acting as a virulence factor. The protein is Extracellular metalloproteinase 5 (MEP5) of Trichophyton rubrum (Athlete's foot fungus).